A 59-amino-acid polypeptide reads, in one-letter code: Conorfamide-Vc1 (59 aa).

An N-terminal signal peptide occupies residues Met1–Ala19. The propeptide occupies Thr20–Lys25. The segment at Ala32–Arg39 is positively charged region crucial for activity against MRGPRX1 receptors. Residue Phe43 is modified to Phenylalanine amide. A propeptide spanning residues Arg45–Leu59 is cleaved from the precursor.

The protein belongs to the FARP (FMRFamide related peptide) family. As to expression, expressed by the venom duct.

It is found in the secreted. In terms of biological role, this peptide activates human and mouse sensory neuron-specific G-protein coupled receptors MRGPRX1. The activity on human receptors has been measured (EC(50)=1.8 uM). Compared with the agonist chloroquine (anti-malaria drug), it is 200-fold more potent. The peptide also causes an increase in cytosolic calcium in a specific subset of DRG neurons, and, in contrast to other Conus venom peptides, the peptide also affects a large fraction of the non-neuronal cells. In vivo, when intracranially injected into mice, it principally renders mice unable to move, and at very low doses, it causes hyperactivity. It also induces itch sensation, since intradermal cheek injection into humanized transgenic mouse (mouse MRGPRX1 replaced by human MRGPRX1) induces scratching. In vivo, when tested at high doses (10 uM) on zebrafish larvae, it induces a range of behavioral effects ranging from an early hypoactivity during the first hour of treatment to an increase in movement during the following hours when the larvae are submitted to strobe light phases. This chain is Conorfamide-Vc1, found in Conus victoriae (Queen Victoria cone).